The sequence spans 461 residues: Cysteine--tRNA ligase (461 aa).

Cysteine 28 contacts Zn(2+). The short motif at 30 to 40 (ITIYDLCHIGH) is the 'HIGH' region element. Zn(2+) contacts are provided by cysteine 209, histidine 234, and glutamate 238. A 'KMSKS' region motif is present at residues 266–270 (KMSKS). An ATP-binding site is contributed by lysine 269.

Belongs to the class-I aminoacyl-tRNA synthetase family. In terms of assembly, monomer. Zn(2+) is required as a cofactor.

The protein localises to the cytoplasm. The catalysed reaction is tRNA(Cys) + L-cysteine + ATP = L-cysteinyl-tRNA(Cys) + AMP + diphosphate. The polypeptide is Cysteine--tRNA ligase (Yersinia pseudotuberculosis serotype IB (strain PB1/+)).